The chain runs to 384 residues: Spermidine/putrescine import ATP-binding protein PotA (384 aa).

In terms of domain architecture, ABC transporter spans I6 to I238. An ATP-binding site is contributed by G40 to S47.

This sequence belongs to the ABC transporter superfamily. Spermidine/putrescine importer (TC 3.A.1.11.1) family. As to quaternary structure, the complex is composed of two ATP-binding proteins (PotA), two transmembrane proteins (PotB and PotC) and a solute-binding protein (PotD).

Its subcellular location is the cell membrane. The catalysed reaction is ATP + H2O + polyamine-[polyamine-binding protein]Side 1 = ADP + phosphate + polyamineSide 2 + [polyamine-binding protein]Side 1.. Part of the ABC transporter complex PotABCD involved in spermidine/putrescine import. Responsible for energy coupling to the transport system. In Streptococcus pyogenes serotype M28 (strain MGAS6180), this protein is Spermidine/putrescine import ATP-binding protein PotA.